A 381-amino-acid chain; its full sequence is Cytochrome b (381 aa).

A run of 4 helical transmembrane segments spans residues 34–54 (FGSL…FLAM), 78–99 (WLIR…YLHI), 114–134 (WNIG…GYVL), and 179–199 (FFAF…IHLL). Heme b-binding residues include His-84 and His-98. Heme b-binding residues include His-183 and His-197. His-202 contributes to the a ubiquinone binding site. Helical transmembrane passes span 227–247 (YKDL…ALFL), 289–309 (LGGV…PMLH), 321–341 (MTQF…WIGG), and 348–368 (FILV…IIIP).

Belongs to the cytochrome b family. The cytochrome bc1 complex contains 3 respiratory subunits (MT-CYB, CYC1 and UQCRFS1), 2 core proteins (UQCRC1 and UQCRC2) and probably 6 low-molecular weight proteins. Requires heme b as cofactor.

It is found in the mitochondrion inner membrane. Functionally, component of the ubiquinol-cytochrome c reductase complex (complex III or cytochrome b-c1 complex) that is part of the mitochondrial respiratory chain. The b-c1 complex mediates electron transfer from ubiquinol to cytochrome c. Contributes to the generation of a proton gradient across the mitochondrial membrane that is then used for ATP synthesis. The sequence is that of Cytochrome b (mt-cyb) from Squalus acanthias (Spiny dogfish).